Consider the following 112-residue polypeptide: Small ribosomal subunit protein uS11c (112 aa).

This sequence belongs to the universal ribosomal protein uS11 family. In terms of assembly, part of the 30S ribosomal subunit.

It is found in the plastid. The chain is Small ribosomal subunit protein uS11c from Euglena longa (Euglenophycean alga).